The following is a 459-amino-acid chain: Protein YTP1 (459 aa).

Topologically, residues 1–6 are extracellular; that stretch reads MTAANK. The chain crosses the membrane as a helical span at residues 7–27; sequence NIVFGFSRSISAILLICFFFE. Residues 28-59 are Cytoplasmic-facing; that stretch reads KVCGDMEHDMGMDDTSGYTRPEIVQAGSKSFH. Residues 60–80 traverse the membrane as a helical segment; that stretch reads WLCTLGFLLLLPSVVTCLSFA. Residues 81–82 lie on the Extracellular side of the membrane; it reads GR. The helical transmembrane segment at 83–103 threads the bilayer; it reads IYSATLLQCTCAVYAFLEAAV. Residues 104 to 122 lie on the Cytoplasmic side of the membrane; it reads LRFQDNDGVENRTSRGTAW. A helical membrane pass occupies residues 123-143; it reads FLVGLTWITLFFGGLAGGTGF. The Extracellular segment spans residues 144–170; the sequence is LVKSKRLQTFISNAGEKRLSYIHRGLS. A helical transmembrane segment spans residues 171–191; sequence FLTVLTGWVKVCLAPVALFGF. The Cytoplasmic portion of the chain corresponds to 192-205; that stretch reads CREAHTGQCIAHGI. The chain crosses the membrane as a helical span at residues 206–226; it reads MGSAFVLYGFIYVLVLVIPWI. The Extracellular segment spans residues 227–266; sequence RSAQTSYSQDYVDSWVMCIWGVVNTFTEHRWGREGWSVHD. Residues 267-287 traverse the membrane as a helical segment; it reads YQHTFMGIIWWTGGILGIFLS. Residues 288–295 lie on the Cytoplasmic side of the membrane; the sequence is RNGRRTFV. The helical transmembrane segment at 296-316 threads the bilayer; the sequence is PSLIIIFTGWAMSEHAQHLII. Topologically, residues 317 to 322 are extracellular; it reads STKVHN. Residues 323–343 traverse the membrane as a helical segment; that stretch reads MFGLVLMCGGALRIIEISFLL. At 344–351 the chain is on the cytoplasmic side; the sequence is RDKRTLDK. A helical transmembrane segment spans residues 352 to 372; it reads IHSFQYLAPFCLVCSGLLFMG. The Extracellular portion of the chain corresponds to 373 to 389; the sequence is ANEEQLILVLRLGGDHS. Residues 390 to 410 traverse the membrane as a helical segment; the sequence is AYVLIIVSGAFLVYFWMIACL. Residues 411-459 are Cytoplasmic-facing; the sequence is EFYLYLLEKGKQGFLPKSYELEEENNNVSFELDNISNEDVDEDTTPFNV.

Its subcellular location is the membrane. This chain is Protein YTP1 (YTP1), found in Saccharomyces cerevisiae (strain ATCC 204508 / S288c) (Baker's yeast).